We begin with the raw amino-acid sequence, 229 residues long: Cytochrome c oxidase subunit 2 (229 aa).

Residues 1–26 (MATWSNLGLQDSASPLMEQLNFFHDH) are Mitochondrial intermembrane-facing. Residues 27 to 48 (TLLILIMITILVGYLMLMLFFN) traverse the membrane as a helical segment. Residues 49–62 (KFTNRFLLHGQTIE) lie on the Mitochondrial matrix side of the membrane. Residues 63–82 (IIWTILPAIVLMFIALPSLR) form a helical membrane-spanning segment. Over 83 to 229 (ILYLLDEINS…IKWITAMNSN (147 aa)) the chain is Mitochondrial intermembrane. Cu cation contacts are provided by His161, Cys196, Glu198, Cys200, His204, and Met207. Residue Glu198 coordinates Mg(2+).

It belongs to the cytochrome c oxidase subunit 2 family. As to quaternary structure, component of the cytochrome c oxidase (complex IV, CIV), a multisubunit enzyme composed of a catalytic core of 3 subunits and several supernumerary subunits. The complex exists as a monomer or a dimer and forms supercomplexes (SCs) in the inner mitochondrial membrane with ubiquinol-cytochrome c oxidoreductase (cytochrome b-c1 complex, complex III, CIII). Cu cation is required as a cofactor.

The protein localises to the mitochondrion inner membrane. The catalysed reaction is 4 Fe(II)-[cytochrome c] + O2 + 8 H(+)(in) = 4 Fe(III)-[cytochrome c] + 2 H2O + 4 H(+)(out). In terms of biological role, component of the cytochrome c oxidase, the last enzyme in the mitochondrial electron transport chain which drives oxidative phosphorylation. The respiratory chain contains 3 multisubunit complexes succinate dehydrogenase (complex II, CII), ubiquinol-cytochrome c oxidoreductase (cytochrome b-c1 complex, complex III, CIII) and cytochrome c oxidase (complex IV, CIV), that cooperate to transfer electrons derived from NADH and succinate to molecular oxygen, creating an electrochemical gradient over the inner membrane that drives transmembrane transport and the ATP synthase. Cytochrome c oxidase is the component of the respiratory chain that catalyzes the reduction of oxygen to water. Electrons originating from reduced cytochrome c in the intermembrane space (IMS) are transferred via the dinuclear copper A center (CU(A)) of subunit 2 and heme A of subunit 1 to the active site in subunit 1, a binuclear center (BNC) formed by heme A3 and copper B (CU(B)). The BNC reduces molecular oxygen to 2 water molecules using 4 electrons from cytochrome c in the IMS and 4 protons from the mitochondrial matrix. The sequence is that of Cytochrome c oxidase subunit 2 (COII) from Simulium vittatum (Striped black fly).